Here is a 298-residue protein sequence, read N- to C-terminus: MKIPDNPQIQRFPATTPAPTLWKAVADDGVAIVTNAIPIDTIQRFHADIDNTGHATYLEDYKAFKDKEFPVQAKHASNLVRTSPVFRHEILNTPLIHEICTAAFQHLGDYWLTSSIFRSTNPGNPAQDFHRDALFHPLLQYQSPSAPHLTVSLIIPTTPFTKANGATRVILGSHKWENMTPQNIDALSKDDSVHAEMNAGDIMILHQRTIHAGGEHLPEAKDTRRLLLLLFTSCQLAQLESALALPRPLVESLTPLAQKMVGWRTVKPAGVNVVGLNTYHTGTLEDGLGLRSNQTMAG.

Residues His130, Asp132, and His211 each coordinate Fe cation.

Belongs to the PhyH family. In terms of assembly, homodimer. Fe cation is required as a cofactor.

It functions in the pathway secondary metabolite biosynthesis; terpenoid biosynthesis. In terms of biological role, iron/alpha-ketoglutarate-dependent dioxygenase; part of the gene cluster that mediates the biosynthesis of calidodehydroaustin, a fungal meroterpenoid. The first step of the pathway is the synthesis of 3,5-dimethylorsellinic acid by the polyketide synthase ausA. 3,5-dimethylorsellinic acid is then prenylated by the polyprenyl transferase ausN. Further epoxidation by the FAD-dependent monooxygenase ausM and cyclization by the probable terpene cyclase ausL lead to the formation of protoaustinoid A. Protoaustinoid A is then oxidized to spiro-lactone preaustinoid A3 by the combined action of the FAD-binding monooxygenases ausB and ausC, and the dioxygenase ausE. Acid-catalyzed keto-rearrangement and ring contraction of the tetraketide portion of preaustinoid A3 by ausJ lead to the formation of preaustinoid A4. The aldo-keto reductase ausK, with the help of ausH, is involved in the next step by transforming preaustinoid A4 into isoaustinone which is in turn hydroxylated by the P450 monooxygenase ausI to form austinolide. The cytochrome P450 monooxygenase ausG modifies austinolide to austinol. Austinol is further acetylated to austin by the O-acetyltransferase ausP, which spontaneously changes to dehydroaustin. The cytochrome P450 monooxygenase ausR then converts dehydroaustin is into 7-dehydrodehydroaustin. The hydroxylation catalyzed by ausR permits the O-acetyltransferase ausQ to add an additional acetyl group to the molecule, leading to the formation of acetoxydehydroaustin. The short chain dehydrogenase ausT catalyzes the reduction of the double bond present between carbon atoms 1 and 2 to convert 7-dehydrodehydroaustin into 1,2-dihydro-7-hydroxydehydroaustin. AusQ catalyzes not only an acetylation reaction but also the addition of the PKS ausV diketide product to 1,2-dihydro-7-hydroxydehydroaustin, forming precalidodehydroaustin. Finally, the iron/alpha-ketoglutarate-dependent dioxygenase converts precalidodehydroaustin into calidodehydroaustin. The polypeptide is Iron/alpha-ketoglutarate-dependent dioxygenase ausO (Aspergillus calidoustus).